Here is a 70-residue protein sequence, read N- to C-terminus: Cytochrome c oxidase subunit 8B, mitochondrial (70 aa).

A mitochondrion-targeting transit peptide spans 1-24 (MLRLAPTVRLLQAPLRGWAVPKAH). At 25–35 (ITAKPAKTPTS) the chain is on the mitochondrial matrix side. A helical membrane pass occupies residues 36–59 (PKEQAIGLSVTFLSFLLPAGWVLY). Topologically, residues 60-70 (HLDNYKKSSAA) are mitochondrial intermembrane.

It belongs to the cytochrome c oxidase VIII family. In terms of assembly, component of the cytochrome c oxidase (complex IV, CIV), a multisubunit enzyme composed of 14 subunits. The complex is composed of a catalytic core of 3 subunits MT-CO1, MT-CO2 and MT-CO3, encoded in the mitochondrial DNA, and 11 supernumerary subunits COX4I1 (or COX4I2), COX5A, COX5B, COX6A2 (or COX6A1), COX6B1 (or COX6B2), COX6C, COX7A1 (or COX7A2), COX7B, COX7C, COX8B and NDUFA4, which are encoded in the nuclear genome. The complex exists as a monomer or a dimer and forms supercomplexes (SCs) in the inner mitochondrial membrane with NADH-ubiquinone oxidoreductase (complex I, CI) and ubiquinol-cytochrome c oxidoreductase (cytochrome b-c1 complex, complex III, CIII), resulting in different assemblies (supercomplex SCI(1)III(2)IV(1) and megacomplex MCI(2)III(2)IV(2)).

It is found in the mitochondrion inner membrane. It participates in energy metabolism; oxidative phosphorylation. In terms of biological role, component of the cytochrome c oxidase, the last enzyme in the mitochondrial electron transport chain which drives oxidative phosphorylation. The respiratory chain contains 3 multisubunit complexes succinate dehydrogenase (complex II, CII), ubiquinol-cytochrome c oxidoreductase (cytochrome b-c1 complex, complex III, CIII) and cytochrome c oxidase (complex IV, CIV), that cooperate to transfer electrons derived from NADH and succinate to molecular oxygen, creating an electrochemical gradient over the inner membrane that drives transmembrane transport and the ATP synthase. Cytochrome c oxidase is the component of the respiratory chain that catalyzes the reduction of oxygen to water. Electrons originating from reduced cytochrome c in the intermembrane space (IMS) are transferred via the dinuclear copper A center (CU(A)) of subunit 2 and heme A of subunit 1 to the active site in subunit 1, a binuclear center (BNC) formed by heme A3 and copper B (CU(B)). The BNC reduces molecular oxygen to 2 water molecules using 4 electrons from cytochrome c in the IMS and 4 protons from the mitochondrial matrix. This Bos taurus (Bovine) protein is Cytochrome c oxidase subunit 8B, mitochondrial (COX8B).